The sequence spans 191 residues: dITP/XTP pyrophosphatase (191 aa).

S8–K13 contributes to the substrate binding site. Mg(2+)-binding residues include E38 and D67. D67 (proton acceptor) is an active-site residue. Residues S68, F146–D149, K169, and H174–R175 contribute to the substrate site.

This sequence belongs to the HAM1 NTPase family. In terms of assembly, homodimer. Mg(2+) serves as cofactor.

It catalyses the reaction XTP + H2O = XMP + diphosphate + H(+). It carries out the reaction dITP + H2O = dIMP + diphosphate + H(+). The catalysed reaction is ITP + H2O = IMP + diphosphate + H(+). Its function is as follows. Pyrophosphatase that catalyzes the hydrolysis of nucleoside triphosphates to their monophosphate derivatives, with a high preference for the non-canonical purine nucleotides XTP (xanthosine triphosphate), dITP (deoxyinosine triphosphate) and ITP. Seems to function as a house-cleaning enzyme that removes non-canonical purine nucleotides from the nucleotide pool, thus preventing their incorporation into DNA/RNA and avoiding chromosomal lesions. In Prochlorococcus marinus subsp. pastoris (strain CCMP1986 / NIES-2087 / MED4), this protein is dITP/XTP pyrophosphatase.